A 930-amino-acid polypeptide reads, in one-letter code: Translation initiation factor IF-2 (930 aa).

The interval 51–325 (PGAGKSAAKP…TREIGGVKVP (275 aa)) is disordered. Composition is skewed to low complexity over residues 56-111 (SAAK…KPGV) and 121-162 (TPAA…GNNP). The segment covering 263–295 (RPGGGPGGGPGRPGGPGGRGGRGNAQGAFGRGG) has biased composition (gly residues). Positions 296-307 (GPRKGRKSKRAK) are enriched in basic residues. Residues 308–320 (RQEFEQQHTREIG) show a composition bias toward basic and acidic residues. The tr-type G domain occupies 422–596 (PRPAVVTVMG…LTADAALELT (175 aa)). Residues 431 to 438 (GHVDHGKT) form a G1 region. 431 to 438 (GHVDHGKT) contacts GTP. A G2 region spans residues 456 to 460 (GITQH). The segment at 481 to 484 (DTPG) is G3. Residues 481–485 (DTPGH) and 535–538 (NKID) each bind GTP. Residues 535 to 538 (NKID) form a G4 region. Positions 571-573 (SAR) are G5.

It belongs to the TRAFAC class translation factor GTPase superfamily. Classic translation factor GTPase family. IF-2 subfamily.

It localises to the cytoplasm. One of the essential components for the initiation of protein synthesis. Protects formylmethionyl-tRNA from spontaneous hydrolysis and promotes its binding to the 30S ribosomal subunits. Also involved in the hydrolysis of GTP during the formation of the 70S ribosomal complex. The chain is Translation initiation factor IF-2 from Micrococcus luteus (strain ATCC 4698 / DSM 20030 / JCM 1464 / CCM 169 / CCUG 5858 / IAM 1056 / NBRC 3333 / NCIMB 9278 / NCTC 2665 / VKM Ac-2230) (Micrococcus lysodeikticus).